Reading from the N-terminus, the 459-residue chain is Acetyltransferase pigO (459 aa).

It belongs to the trichothecene O-acetyltransferase family.

Its pathway is secondary metabolite biosynthesis. Its function is as follows. Acetyltransferase; part of the gene cluster that mediates the biosynthesis of azaphilone pigments (MonAzPs), a complex mixture of compounds with a common azaphilone skeleton very widely used as food colorants. PigM and pigO are involved in the elimination of the omega-1 alcohol with pigM acting as an O-acetyltransferase that synthesizes the O-11 acetyl intermediate whereas pigO eliminates acetic acid to yield an intermediate with a C10(11) double bond. The first step of the pathway is performed by the nrPKS pigA that forms the hexaketide precursor from successive condensations of five malonyl-CoA units, with a simple acetyl-CoA starter unit. The role of esterase pigG is not clear, but it may play at most a supplementary role in the formation of the benzaldehyde produced by the pigA nrPKS. This very reactive benzaldehyde is intercepted by the pigC ketoreductase that to provide the first stable enzyme-free MonAzPs intermediate, 6-(4-hydroxy-2-oxopentyl)-3-methyl-2,4-dioxocyclohexane carbaldehyde, also known as M7PKS-1. The FAD-dependent monooxygenase pigN hydroxylates M7PKS-1 at C-4, which triggers the formation of the pyran ring. PigJ, pigK and pigD are involved in the acetylation of the pyran ring. PigJ and pigK form the two subunits of a dedicated fungal FAS that produces the side chain fatty acyl moiety of MonAzPs and pigD transfers the fatty acyl chain to the C-4 alcohol. PigM and pigO are involved in the elimination of the omega-1 alcohol. PigM acts as an O-acetyltransferase that synthesizes the putative O-11 acetyl intermediate whereas pigO eliminates acetic acid to yield an intermediate with a C10(11) double bond. The dehydration of the C-11 alcohol followed by the reduction of the C6(7) double bond by the NAD(P)H-dependent oxidoreductase pigE increases the electrophilicity of the C-5 ketone of the resulting acyl benzopyran. This in turn sets up the C-5 ketone for an intramolecular Knoevenagel aldol condensation with the C-20 enol of the side chain. This condensation affords the characteristic linear tricyclic carbon skeletons of the yellow pigments that serve as the common precursors for the classical yellow pigments monascin and ankaflavin, orange pigments rubopunctatin and monascorubrin, and red pigments ribropunctamine and monascorubramine. The FAD-dependent oxidoreductase pigF is especially invoved in the biosynthesis of orange and red pigments via desaturation of C6(7). This chain is Acetyltransferase pigO, found in Monascus ruber (Mold).